The following is a 299-amino-acid chain: Class II hydrophobin C (299 aa).

The signal sequence occupies residues 1–17; it reads MKFLTVAAAIFASTSLA. N39, N78, and N91 each carry an N-linked (GlcNAc...) asparagine glycan. 4 disulfide bridges follow: C232-C281, C242-C272, C243-C255, and C282-C293.

Belongs to the cerato-ulmin hydrophobin family.

It localises to the secreted. Its subcellular location is the cell wall. It is found in the vacuole. The protein localises to the cytoplasmic vesicle. In terms of biological role, aerial growth, conidiation, and dispersal of filamentous fungi in the environment rely upon a capability of their secreting small amphipathic proteins called hydrophobins (HPBs) with low sequence identity. Class I can self-assemble into an outermost layer of rodlet bundles on aerial cell surfaces, conferring cellular hydrophobicity that supports fungal growth, development and dispersal; whereas Class II form highly ordered films at water-air interfaces through intermolecular interactions but contribute nothing to the rodlet structure. Hyd2C contributes to certain cell wall-related features, such as hydrophobicity but is not involved in cell wall-related events during fungal proliferation in host hemocoel. Does not contribute to conidial hydrophobicity. Involved actively in the asexual development. The sequence is that of Class II hydrophobin C from Beauveria bassiana (strain ARSEF 2860) (White muscardine disease fungus).